A 146-amino-acid polypeptide reads, in one-letter code: Cytochrome c oxidase subunit 5A, mitochondrial (146 aa).

The transit peptide at Met-1–Tyr-37 directs the protein to the mitochondrion. The short motif at Leu-2–Arg-16 is the SIFI-degron element. 2 positions are modified to N6-acetyllysine: Lys-83 and Lys-109. Phosphothreonine is present on Thr-137.

This sequence belongs to the cytochrome c oxidase subunit 5A family. As to quaternary structure, component of the cytochrome c oxidase (complex IV, CIV), a multisubunit enzyme composed of 14 subunits. The complex is composed of a catalytic core of 3 subunits MT-CO1, MT-CO2 and MT-CO3, encoded in the mitochondrial DNA, and 11 supernumerary subunits COX4I, COX5A, COX5B, COX6A, COX6B, COX6C, COX7A, COX7B, COX7C, COX8 and NDUFA4, which are encoded in the nuclear genome. The complex exists as a monomer or a dimer and forms supercomplexes (SCs) in the inner mitochondrial membrane with NADH-ubiquinone oxidoreductase (complex I, CI) and ubiquinol-cytochrome c oxidoreductase (cytochrome b-c1 complex, complex III, CIII), resulting in different assemblies (supercomplex SCI(1)III(2)IV(1) and megacomplex MCI(2)III(2)IV(2)). Interacts with AFG1L. Interacts with RAB5IF. In terms of processing, in response to mitochondrial stress, the precursor protein is ubiquitinated by the SIFI complex in the cytoplasm before mitochondrial import, leading to its degradation. Within the SIFI complex, UBR4 initiates ubiquitin chain that are further elongated or branched by KCMF1.

The protein localises to the mitochondrion inner membrane. It participates in energy metabolism; oxidative phosphorylation. Functionally, component of the cytochrome c oxidase, the last enzyme in the mitochondrial electron transport chain which drives oxidative phosphorylation. The respiratory chain contains 3 multisubunit complexes succinate dehydrogenase (complex II, CII), ubiquinol-cytochrome c oxidoreductase (cytochrome b-c1 complex, complex III, CIII) and cytochrome c oxidase (complex IV, CIV), that cooperate to transfer electrons derived from NADH and succinate to molecular oxygen, creating an electrochemical gradient over the inner membrane that drives transmembrane transport and the ATP synthase. Cytochrome c oxidase is the component of the respiratory chain that catalyzes the reduction of oxygen to water. Electrons originating from reduced cytochrome c in the intermembrane space (IMS) are transferred via the dinuclear copper A center (CU(A)) of subunit 2 and heme A of subunit 1 to the active site in subunit 1, a binuclear center (BNC) formed by heme A3 and copper B (CU(B)). The BNC reduces molecular oxygen to 2 water molecules using 4 electrons from cytochrome c in the IMS and 4 protons from the mitochondrial matrix. In Mus musculus (Mouse), this protein is Cytochrome c oxidase subunit 5A, mitochondrial (Cox5a).